A 620-amino-acid chain; its full sequence is Rpb7-binding protein seb1 (620 aa).

Residues 1–151 (MSGIAEFDGI…SLRSKLKDAM (151 aa)) form the CID domain. Disordered stretches follow at residues 151 to 191 (MAST…RPVE) and 327 to 398 (SVPL…TIPP). The residue at position 343 (serine 343) is a Phosphoserine. A compositionally biased stretch (low complexity) spans 361-374 (PSPSHLSIPSTLPP). Residues 406 to 478 (RTLFLGGITR…TTIRTKWGVG (73 aa)) form the RRM domain. The interval 558 to 620 (RGRKPYRGGP…YVSQPPWQPQ (63 aa)) is disordered. Residues 570–580 (HHGERHFDSGN) show a composition bias toward basic and acidic residues.

As to quaternary structure, interacts with rpb7.

It is found in the nucleus. Its function is as follows. Involved in the processing of pol II transcripts. The chain is Rpb7-binding protein seb1 (seb1) from Schizosaccharomyces pombe (strain 972 / ATCC 24843) (Fission yeast).